The chain runs to 640 residues: SH3 domain-containing protein 21 (640 aa).

Residues 1–60 form a disordered region; sequence MVQSELQLQPRAGGRAEAASWGDRGNDKGGLGNPDMPSVSPGPQRPPKLSSLAYDSPPDY. In terms of domain architecture, SH3 spans 65–126; it reads SHPEVYRVLF…PDNFVLPPPP (62 aa). 3 disordered regions span residues 133–361, 401–551, and 618–640; these read RKVV…PLGD, YFVA…PDSQ, and VQVM…TQTY. A compositionally biased stretch (basic and acidic residues) spans 177–186; sequence PSRDSQKLTS. The span at 210–220 shows a compositional bias: polar residues; that stretch reads TQTPQQRSVSS. Composition is skewed to basic and acidic residues over residues 401-416, 459-469, and 494-532; these read YFVA…EAHT, ALEKPHPHEEA, and RPLR…EVPP. A coiled-coil region spans residues 572–626; sequence VDVTSLRGEVESLRRALELMEVQLERKLTDIWEELKSEKEQRRRLEVQVMQGTQK. Polar residues predominate over residues 621–640; it reads MQGTQKSQTPRVIHTQTQTY.

In Homo sapiens (Human), this protein is SH3 domain-containing protein 21 (SH3D21).